The chain runs to 445 residues: C-terminal-binding protein 2 (445 aa).

R22 carries the asymmetric dimethylarginine modification. NAD(+) contacts are provided by residues S106, 186–191 (IGFGRT), D210, 243–249 (CNLNEHN), 270–272 (AAR), and D296. R272 is a catalytic residue. The active site involves E301. H321 serves as the catalytic Proton donor. 321-324 (HTAW) is a binding site for NAD(+). A disordered region spans residues 414-445 (THNLPTVAHPSQAPSPNQPTKHGDNREHPNEQ). Residue S428 is modified to Phosphoserine; by HIPK2. Basic and acidic residues predominate over residues 434-445 (KHGDNREHPNEQ).

The protein belongs to the D-isomer specific 2-hydroxyacid dehydrogenase family. In terms of assembly, interacts with HIPK2, ZNF217 and PNN. Interacts with the transcription factors BKLF, delta EF1/AREB6/ZEB, EVI-1 and Friend of GATA (FOG) via the consensus motif P-X-[DNS]-L-[STVA]. Can form a complex with BKLF on a CACCC-box oligonucleotide. Can form homodimers or heterodimers of CTBP1 and CTBP2. Interacts with NRIP1 and WIZ. Interacts with PRDM16; represses white adipose tissue (WAT)-specific genes expression. Interacts with MCRIP1. Phosphorylation by HIPK2 on Ser-428 induces proteasomal degradation. Isoform 2 is specifically localized in synaptic ribbon (at protein level).

It is found in the nucleus. Its subcellular location is the synapse. Corepressor targeting diverse transcription regulators. Functions in brown adipose tissue (BAT) differentiation. Isoform 2 probably acts as a scaffold for specialized synapses. The protein is C-terminal-binding protein 2 (Ctbp2) of Rattus norvegicus (Rat).